A 186-amino-acid chain; its full sequence is Ribosome-recycling factor (186 aa).

The disordered stretch occupies residues 135–162 (DGMDGLKKAEKDGDIGQDESRAQSERVQ).

It belongs to the RRF family.

It is found in the cytoplasm. Responsible for the release of ribosomes from messenger RNA at the termination of protein biosynthesis. May increase the efficiency of translation by recycling ribosomes from one round of translation to another. In Sinorhizobium fredii (strain NBRC 101917 / NGR234), this protein is Ribosome-recycling factor.